Here is a 230-residue protein sequence, read N- to C-terminus: Preflagellin peptidase (230 aa).

A topological domain (cytoplasmic) is located at residue M1. Residues 2-18 (IEYIIGALGLIIASVQD) form a helical membrane-spanning segment. Topologically, residues 19 to 23 (FRSRE) are extracellular. A helical membrane pass occupies residues 24–46 (IEDYIWIFLAVFGVLFAIYSSIT). Over 47-49 (LLD) the chain is Cytoplasmic. The chain crosses the membrane as a helical span at residues 50–72 (YSILINSISGFVICFILGYMMFL). At 73–78 (SGIGGG) the chain is on the extracellular side. Residues 79 to 89 (DGKMLIGLGAL) traverse the membrane as a helical segment. Residues 90–110 (VPKFQMPIYTSLGTLLNLNYV) are Cytoplasmic-facing. The helical transmembrane segment at 111–139 (PTFPIMVFINGIFFMVFLPFVILFRNILN) threads the bilayer. At 140-204 (GARPKTGKEF…EEIWVTPQIP (65 aa)) the chain is on the extracellular side. Residues 205–216 (LIIPITLSYLVT) form a helical membrane-spanning segment. Topologically, residues 217–230 (PIIGDRILDFLIPF) are cytoplasmic.

This sequence belongs to the peptidase A24 family. Archaeal preflagellin peptidase subfamily.

It is found in the cell membrane. The catalysed reaction is Cleaves the signal peptide of 3 to 12 amino acids from the N-terminal of preflagellin, usually at Arg-Gly-|- or Lys-Gly-|-, to release flagellin.. Its function is as follows. Cleaves the N-terminal leader peptide from preflagellins. This chain is Preflagellin peptidase (flaK), found in Methanococcus maripaludis (strain C6 / ATCC BAA-1332).